Consider the following 184-residue polypeptide: Guanylate kinase (184 aa).

The Guanylate kinase-like domain maps to 5-183 (NGLIVITGPS…ALLEIKKLIK (179 aa)). An ATP-binding site is contributed by 12–19 (GPSGVGKG).

This sequence belongs to the guanylate kinase family.

The protein resides in the cytoplasm. It carries out the reaction GMP + ATP = GDP + ADP. Its function is as follows. Essential for recycling GMP and indirectly, cGMP. The protein is Guanylate kinase of Prochlorococcus marinus (strain SARG / CCMP1375 / SS120).